The chain runs to 385 residues: Tetraacyldisaccharide 4'-kinase (385 aa).

60-67 is an ATP binding site; that stretch reads TVGGSGKT.

It belongs to the LpxK family.

It catalyses the reaction a lipid A disaccharide + ATP = a lipid IVA + ADP + H(+). It participates in glycolipid biosynthesis; lipid IV(A) biosynthesis; lipid IV(A) from (3R)-3-hydroxytetradecanoyl-[acyl-carrier-protein] and UDP-N-acetyl-alpha-D-glucosamine: step 6/6. In terms of biological role, transfers the gamma-phosphate of ATP to the 4'-position of a tetraacyldisaccharide 1-phosphate intermediate (termed DS-1-P) to form tetraacyldisaccharide 1,4'-bis-phosphate (lipid IVA). This Psychrobacter arcticus (strain DSM 17307 / VKM B-2377 / 273-4) protein is Tetraacyldisaccharide 4'-kinase.